The following is a 334-amino-acid chain: Fructose-1,6-bisphosphatase class 1 (334 aa).

Positions 89, 112, 114, and 115 each coordinate Mg(2+). Residues aspartate 115–serine 118, asparagine 208, tyrosine 241, tyrosine 259–tyrosine 261, and lysine 271 contribute to the substrate site. A Mg(2+)-binding site is contributed by glutamate 277.

Belongs to the FBPase class 1 family. Homotetramer. It depends on Mg(2+) as a cofactor.

Its subcellular location is the cytoplasm. The catalysed reaction is beta-D-fructose 1,6-bisphosphate + H2O = beta-D-fructose 6-phosphate + phosphate. It participates in carbohydrate biosynthesis; gluconeogenesis. This Pectobacterium atrosepticum (strain SCRI 1043 / ATCC BAA-672) (Erwinia carotovora subsp. atroseptica) protein is Fructose-1,6-bisphosphatase class 1.